The primary structure comprises 92 residues: Acylphosphatase (92 aa).

One can recognise an Acylphosphatase-like domain in the interval 5 to 92 (CIAAYVYGVV…ADFQGFSIRY (88 aa)). Catalysis depends on residues R20 and N38.

This sequence belongs to the acylphosphatase family.

It carries out the reaction an acyl phosphate + H2O = a carboxylate + phosphate + H(+). This chain is Acylphosphatase (acyP), found in Serratia proteamaculans (strain 568).